Here is a 384-residue protein sequence, read N- to C-terminus: S-adenosylmethionine synthase (384 aa).

His-15 is an ATP binding site. Asp-17 contributes to the Mg(2+) binding site. Residue Glu-43 coordinates K(+). The L-methionine site is built by Glu-56 and Gln-99. A flexible loop region spans residues 99 to 109 (QSPDINQGVDR). ATP-binding positions include 164–166 (DAK), 230–231 (RF), Asp-239, 245–246 (RK), Ala-262, and Lys-266. Asp-239 contacts L-methionine. Lys-270 is a binding site for L-methionine.

This sequence belongs to the AdoMet synthase family. Homotetramer; dimer of dimers. Mg(2+) serves as cofactor. It depends on K(+) as a cofactor.

It localises to the cytoplasm. The catalysed reaction is L-methionine + ATP + H2O = S-adenosyl-L-methionine + phosphate + diphosphate. It functions in the pathway amino-acid biosynthesis; S-adenosyl-L-methionine biosynthesis; S-adenosyl-L-methionine from L-methionine: step 1/1. Its function is as follows. Catalyzes the formation of S-adenosylmethionine (AdoMet) from methionine and ATP. The overall synthetic reaction is composed of two sequential steps, AdoMet formation and the subsequent tripolyphosphate hydrolysis which occurs prior to release of AdoMet from the enzyme. The chain is S-adenosylmethionine synthase from Photobacterium profundum (strain SS9).